The chain runs to 403 residues: Signal-transducing adaptor protein 2 (403 aa).

The PH domain occupies 18 to 130 (PSHYYESFLE…VPTDLTLLPG (113 aa)). Tyr22 bears the Phosphotyrosine; by SRC mark. An SH2 domain is found at 133-248 (YMMSEVLAKE…KALVPFLLDE (116 aa)). Tyr250 carries the post-translational modification Phosphotyrosine; by PTK6. The disordered stretch occupies residues 270–308 (APSAPGPGPAPCTGGPKPLSPASSQDKLPPLPPLPNQEE). Position 310 is a phosphotyrosine (Tyr310). Phosphotyrosine; by SRC is present on Tyr322. A disordered region spans residues 331-374 (SWPVILKPKKLPKPPAKLPKPPVGPKPEPKVFNGGLGRKLPVSS). Pro residues predominate over residues 343–356 (KPPAKLPKPPVGPK). Residues 382-402 (AGLADMTAELQKKLEKRRALE) adopt a coiled-coil conformation.

As to quaternary structure, interacts with PTK6 and CSF1R. In terms of processing, phosphorylated on tyrosine. Tyr-250 may be important for interaction with kinases. Phosphorylated by PTK6 at Tyr-250 modulates PTK6-mediated STAT3 activation. Tyr-22 and Tyr-322 appears to be phosphorylated by SRC. As to expression, widely expressed.

It is found in the cytoplasm. Functionally, substrate of protein kinase PTK6. May play a regulatory role in the acute-phase response in systemic inflammation and may modulate STAT3 activity. This is Signal-transducing adaptor protein 2 (STAP2) from Homo sapiens (Human).